Here is a 185-residue protein sequence, read N- to C-terminus: ATP synthase subunit delta (185 aa).

The protein belongs to the ATPase delta chain family. In terms of assembly, F-type ATPases have 2 components, F(1) - the catalytic core - and F(0) - the membrane proton channel. F(1) has five subunits: alpha(3), beta(3), gamma(1), delta(1), epsilon(1). F(0) has three main subunits: a(1), b(2) and c(10-14). The alpha and beta chains form an alternating ring which encloses part of the gamma chain. F(1) is attached to F(0) by a central stalk formed by the gamma and epsilon chains, while a peripheral stalk is formed by the delta and b chains.

It is found in the cell inner membrane. Its function is as follows. F(1)F(0) ATP synthase produces ATP from ADP in the presence of a proton or sodium gradient. F-type ATPases consist of two structural domains, F(1) containing the extramembraneous catalytic core and F(0) containing the membrane proton channel, linked together by a central stalk and a peripheral stalk. During catalysis, ATP synthesis in the catalytic domain of F(1) is coupled via a rotary mechanism of the central stalk subunits to proton translocation. This protein is part of the stalk that links CF(0) to CF(1). It either transmits conformational changes from CF(0) to CF(1) or is implicated in proton conduction. The polypeptide is ATP synthase subunit delta (Phocaeicola vulgatus (strain ATCC 8482 / DSM 1447 / JCM 5826 / CCUG 4940 / NBRC 14291 / NCTC 11154) (Bacteroides vulgatus)).